A 156-amino-acid chain; its full sequence is Cyanate hydratase (156 aa).

Catalysis depends on residues Arg96, Glu99, and Ser122.

This sequence belongs to the cyanase family.

It carries out the reaction cyanate + hydrogencarbonate + 3 H(+) = NH4(+) + 2 CO2. Its function is as follows. Catalyzes the reaction of cyanate with bicarbonate to produce ammonia and carbon dioxide. The polypeptide is Cyanate hydratase (Pseudomonas putida (strain W619)).